A 1418-amino-acid polypeptide reads, in one-letter code: Ankyrin repeat and fibronectin type-III domain-containing protein 1 (1418 aa).

The segment at 119–236 (RDSVCSLPPP…DRGETPSLSE (118 aa)) is disordered. The segment covering 144–154 (PENTSINLSQC) has biased composition (polar residues). Residues 171-186 (SASPTSSTPLRTTSTP) are compositionally biased toward low complexity. The segment covering 223–236 (LRDHDRGETPSLSE) has biased composition (basic and acidic residues). 2 ANK repeats span residues 419–450 (QSSEALFEAVEQQDLDAVQILLFQYTADELDL) and 456–485 (EGLTPLDISIMTNNVPIAKLLLKAGGKESP). Residues 556–652 (APLMVRLSVT…LSQPPSAVPS (97 aa)) form the Fibronectin type-III domain. Residues 893–900 (GLYLGYLK) form a highly conserved peptide sequence region. Disordered regions lie at residues 1134 to 1179 (VQKN…EVFL), 1321 to 1343 (LETPLSIPHSPTTSYSLDEYRQP), and 1361 to 1418 (KTSP…SSTL). Positions 1136-1146 (KNDSTSSNTDY) are enriched in polar residues. Over residues 1407 to 1418 (NEQVSEILSSTL) the composition is skewed to polar residues.

Required for vestibular-related functions. The sequence is that of Ankyrin repeat and fibronectin type-III domain-containing protein 1 (ankfn1) from Danio rerio (Zebrafish).